A 240-amino-acid chain; its full sequence is Serine protease SplB (240 aa).

Residues 1–36 (MNKNVVIKSLAALTILTSVTGIGITLVEEVQQTAKA) form the signal peptide. Active-site charge relay system residues include histidine 75, aspartate 113, and serine 193.

This sequence belongs to the peptidase S1B family.

The protein localises to the secreted. Serine protease that cleaves specifically after the sequence Trp-Glu-Leu-Gln. The polypeptide is Serine protease SplB (splB) (Staphylococcus aureus (strain MW2)).